The following is a 116-amino-acid chain: Prefoldin subunit beta (116 aa).

Belongs to the prefoldin subunit beta family. As to quaternary structure, heterohexamer of two alpha and four beta subunits.

The protein localises to the cytoplasm. In terms of biological role, molecular chaperone capable of stabilizing a range of proteins. Seems to fulfill an ATP-independent, HSP70-like function in archaeal de novo protein folding. The sequence is that of Prefoldin subunit beta from Thermococcus onnurineus (strain NA1).